The chain runs to 260 residues: Pyridoxine 5'-phosphate synthase (260 aa).

3-amino-2-oxopropyl phosphate is bound at residue Asn-15. 17–18 (DH) is a 1-deoxy-D-xylulose 5-phosphate binding site. Arg-26 serves as a coordination point for 3-amino-2-oxopropyl phosphate. Catalysis depends on His-51, which acts as the Proton acceptor. 1-deoxy-D-xylulose 5-phosphate is bound by residues Arg-53 and His-58. Residue Glu-78 is the Proton acceptor of the active site. Residue Thr-108 coordinates 1-deoxy-D-xylulose 5-phosphate. The active-site Proton donor is the His-199. Residues Gly-200 and 221 to 222 (GH) each bind 3-amino-2-oxopropyl phosphate.

Belongs to the PNP synthase family. In terms of assembly, homooctamer; tetramer of dimers.

It is found in the cytoplasm. It carries out the reaction 3-amino-2-oxopropyl phosphate + 1-deoxy-D-xylulose 5-phosphate = pyridoxine 5'-phosphate + phosphate + 2 H2O + H(+). It functions in the pathway cofactor biosynthesis; pyridoxine 5'-phosphate biosynthesis; pyridoxine 5'-phosphate from D-erythrose 4-phosphate: step 5/5. In terms of biological role, catalyzes the complicated ring closure reaction between the two acyclic compounds 1-deoxy-D-xylulose-5-phosphate (DXP) and 3-amino-2-oxopropyl phosphate (1-amino-acetone-3-phosphate or AAP) to form pyridoxine 5'-phosphate (PNP) and inorganic phosphate. This is Pyridoxine 5'-phosphate synthase from Cupriavidus metallidurans (strain ATCC 43123 / DSM 2839 / NBRC 102507 / CH34) (Ralstonia metallidurans).